The sequence spans 319 residues: HPr kinase/phosphorylase (319 aa).

Active-site residues include His144 and Lys165. 159–166 provides a ligand contact to ATP; that stretch reads GKSGIGKS. Mg(2+) is bound at residue Ser166. The Proton acceptor; for phosphorylation activity. Proton donor; for dephosphorylation activity role is filled by Asp183. Positions 207-216 are important for the catalytic mechanism of both phosphorylation and dephosphorylation; that stretch reads MEIRGLGVIN. Glu208 contributes to the Mg(2+) binding site. Arg249 is an active-site residue. Positions 270–275 are important for the catalytic mechanism of dephosphorylation; the sequence is PVRPGR.

It belongs to the HPrK/P family. In terms of assembly, homohexamer. The cofactor is Mg(2+).

The enzyme catalyses [HPr protein]-L-serine + ATP = [HPr protein]-O-phospho-L-serine + ADP + H(+). It catalyses the reaction [HPr protein]-O-phospho-L-serine + phosphate + H(+) = [HPr protein]-L-serine + diphosphate. Its function is as follows. Catalyzes the ATP- as well as the pyrophosphate-dependent phosphorylation of a specific serine residue in HPr, a phosphocarrier protein of the phosphoenolpyruvate-dependent sugar phosphotransferase system (PTS). HprK/P also catalyzes the pyrophosphate-producing, inorganic phosphate-dependent dephosphorylation (phosphorolysis) of seryl-phosphorylated HPr (P-Ser-HPr). This Geobacter sulfurreducens (strain ATCC 51573 / DSM 12127 / PCA) protein is HPr kinase/phosphorylase.